The sequence spans 515 residues: 13S globulin seed storage protein (515 aa).

Positions 1 to 22 are cleaved as a signal peptide; that stretch reads MSTKLILSFSLCLMVLSCSAQA. Residues 23-96 are igE-binding epitope; it reads AQLWPWRKGQ…RYVIQPGGLL (74 aa). Cystine bridges form between cysteine 47-cysteine 80 and cysteine 123-cysteine 327. One can recognise a Cupin type-1 1 domain in the interval 52–272; sequence LTASEPSRRV…FRDVDRETIS (221 aa). The interval 97-172 is igE-binding epitope with a very strong IgE-binding activity; that stretch reads LPSYSNAPYI…REGDVIPSPA (76 aa). Disordered stretches follow at residues 123 to 156, 210 to 241, and 295 to 320; these read CPETFQSDSEYPQSQRGQHSRESESQESSRGDQH, LAGQSQQGREERRSQQQTREEGGDRQSRESDD, and PEDSEEGYERQRGDRKRDERGSGRSN. Basic and acidic residues-rich tracts occupy residues 141 to 156, 217 to 239, and 295 to 316; these read HSRESESQESSRGDQH, GREERRSQQQTREEGGDRQSRES, and PEDSEEGYERQRGDRKRDERGS. IgE-binding epitope regions lie at residues 173–248 and 249–320; these read GVVQ…LIGA and NILS…GRSN. The region spanning 333–482 is the Cupin type-1 2 domain; that stretch reads QNVNRPSHAD…SYDISTEEAY (150 aa). The segment at 347 to 387 is igE-binding epitope with a strong IgE-binding activity; sequence RAGRINTVNSNNLPILEFLQLSAQHVVLYKNAIIGPRWNLN. 3 igE-binding epitope regions span residues 407–457, 440–476, and 475–511; these read EGKS…PIAG, EWVELKNNDNAITSPIAGRTSVLRAIPVEVLANSYDI, and DISTEEAYKLKNGRQEVEVFRPFQSRYEKEEEKERER.

Belongs to the 11S seed storage protein (globulins) family. In terms of assembly, homohexamer. In terms of processing, proteolytically processed from a single precursor to produce an acidic and a basic chain that are linked by a disulfide bond. In terms of tissue distribution, expressed in seeds (at protein level).

Seed storage protein. The protein is 13S globulin seed storage protein of Fagopyrum tataricum (Tartarian buckwheat).